The following is a 354-amino-acid chain: NADH-quinone oxidoreductase subunit H (354 aa).

A run of 8 helical transmembrane segments spans residues 23 to 43 (LVRAVCIILPLLLCVAYLILW), 91 to 111 (YIIAPLMVLMPAVAIWAVIPF), 124 to 144 (LLYVMAISSVGVYGVILAGWA), 162 to 182 (ISYEIAMGFALVTVLMVTGSL), 203 to 223 (ILSWNWLPLLPMFGVYFISGV), 250 to 270 (GMAFALFFLAEYINMIVISAL), 291 to 311 (IPGFFWLLIKVFLLLSVFIWL), and 330 to 350 (IFIPLTVGWLVVVAIWLVSPW).

It belongs to the complex I subunit 1 family. As to quaternary structure, NDH-1 is composed of 14 different subunits. Subunits NuoA, H, J, K, L, M, N constitute the membrane sector of the complex.

Its subcellular location is the cell inner membrane. The enzyme catalyses a quinone + NADH + 5 H(+)(in) = a quinol + NAD(+) + 4 H(+)(out). Its function is as follows. NDH-1 shuttles electrons from NADH, via FMN and iron-sulfur (Fe-S) centers, to quinones in the respiratory chain. The immediate electron acceptor for the enzyme in this species is believed to be ubiquinone. Couples the redox reaction to proton translocation (for every two electrons transferred, four hydrogen ions are translocated across the cytoplasmic membrane), and thus conserves the redox energy in a proton gradient. This subunit may bind ubiquinone. In Ralstonia pickettii (strain 12J), this protein is NADH-quinone oxidoreductase subunit H.